The following is a 486-amino-acid chain: MTTKKVRVRFCPSPTGTPHVGLVRTALFNWAYARHTGGDFVFRIEDTDAARDSDESYAAILDALRWLGMDWDEGPEVGGPYEPYRQSQRREIYRDVVARLLEAGEVYEAYSTPEEVEARHLAAGRNPKLGYDNYDRDLTDAQRKAFADEGRRPVLRLRMPDEDLSWNDLVRGPTTFAAGSVPDFAITRSNGDPLYTLVNPVDDALMKITHVLRGEDILPSTPRQIALYRALMRIGVAEFVPEFAHLPSVLGEGNKKLSKRDPQSNLFLHRDRGFIPEGLLNYLALLGWGIADDHDVFSLDEMVAAFDVADVNSNPARFDQKKADAINAEHIRMLAPEDFTARLREYFVTHGYDTTLDDAAFAEAAALVQTRVVVLGDAWGLLKFFNDDAYEIDEKSAAKELKPESAAVLDAALSALEAVGDWTTPAIEAALKTALLEGLELKPRKAFGPIRVAVTGAAVSPPLFESMELLGRDRSLARLRAARDRV.

The 'HIGH' region signature appears at 12–22 (PSPTGTPHVGL). Residues 256–260 (KLSKR) carry the 'KMSKS' region motif. Residue lysine 259 coordinates ATP.

This sequence belongs to the class-I aminoacyl-tRNA synthetase family. Glutamate--tRNA ligase type 1 subfamily. Monomer.

The protein resides in the cytoplasm. The enzyme catalyses tRNA(Glu) + L-glutamate + ATP = L-glutamyl-tRNA(Glu) + AMP + diphosphate. In terms of biological role, catalyzes the attachment of glutamate to tRNA(Glu) in a two-step reaction: glutamate is first activated by ATP to form Glu-AMP and then transferred to the acceptor end of tRNA(Glu). This chain is Glutamate--tRNA ligase, found in Mycolicibacterium smegmatis (strain ATCC 700084 / mc(2)155) (Mycobacterium smegmatis).